We begin with the raw amino-acid sequence, 379 residues long: S-adenosylmethionine:tRNA ribosyltransferase-isomerase (379 aa).

The interval 35 to 58 (AESRPHAESVPHAESRPHAESAFS) is disordered.

The protein belongs to the QueA family. Monomer.

The protein localises to the cytoplasm. The catalysed reaction is 7-aminomethyl-7-carbaguanosine(34) in tRNA + S-adenosyl-L-methionine = epoxyqueuosine(34) in tRNA + adenine + L-methionine + 2 H(+). It participates in tRNA modification; tRNA-queuosine biosynthesis. Its function is as follows. Transfers and isomerizes the ribose moiety from AdoMet to the 7-aminomethyl group of 7-deazaguanine (preQ1-tRNA) to give epoxyqueuosine (oQ-tRNA). The sequence is that of S-adenosylmethionine:tRNA ribosyltransferase-isomerase from Rhizobium leguminosarum bv. trifolii (strain WSM2304).